Here is a 244-residue protein sequence, read N- to C-terminus: Transcriptional regulatory protein YpdB (244 aa).

A Response regulatory domain is found at 2–116; it reads KVIIVEDEFL…RITGMLQKLE (115 aa). Residue Asp-53 is modified to 4-aspartylphosphate. In terms of domain architecture, HTH LytTR-type spans 139-244; it reads INLVKDERII…VKEFRQLMHL (106 aa).

Phosphorylated by YpdA.

The protein resides in the cytoplasm. Member of the two-component regulatory system YpdA/YpdB. YpdB regulates expression of yhjX by binding to its promoter region. The polypeptide is Transcriptional regulatory protein YpdB (ypdB) (Escherichia coli O157:H7).